The sequence spans 133 residues: Small ribosomal subunit protein uS8 (133 aa).

The protein belongs to the universal ribosomal protein uS8 family. In terms of assembly, part of the 30S ribosomal subunit. Contacts proteins S5 and S12.

Functionally, one of the primary rRNA binding proteins, it binds directly to 16S rRNA central domain where it helps coordinate assembly of the platform of the 30S subunit. The chain is Small ribosomal subunit protein uS8 from Prochlorococcus marinus (strain MIT 9515).